Here is a 185-residue protein sequence, read N- to C-terminus: Ribosome maturation factor RimM (185 aa).

The PRC barrel domain maps to 105–184 (KDEYYWKDII…IVVVDWEIYK (80 aa)).

It belongs to the RimM family. Binds ribosomal protein uS19.

It localises to the cytoplasm. An accessory protein needed during the final step in the assembly of 30S ribosomal subunit, possibly for assembly of the head region. Essential for efficient processing of 16S rRNA. May be needed both before and after RbfA during the maturation of 16S rRNA. It has affinity for free ribosomal 30S subunits but not for 70S ribosomes. This chain is Ribosome maturation factor RimM, found in Blochmanniella floridana.